A 55-amino-acid chain; its full sequence is MTTDPKMLELLVCPITGGNLSFNRKTQELISLKAKLAYPIRDGVPIMLASEARPL.

It belongs to the UPF0434 family.

This is UPF0434 protein BARBAKC583_1098 from Bartonella bacilliformis (strain ATCC 35685 / KC583 / Herrer 020/F12,63).